Here is a 136-residue protein sequence, read N- to C-terminus: Histone H3, embryonic (136 aa).

Residues 1–43 form a disordered region; sequence MARTKQTARKSTGGKAPRKQLATKAARKSAPATGGVKKPHRYR. Lys-5 carries the post-translational modification N6-methylated lysine. Lys-10 carries the post-translational modification N6-acetyllysine; alternate. Lys-10 carries the N6-methylated lysine; alternate modification. Ser-11 bears the Phosphoserine mark. 2 positions are modified to N6-acetyllysine: Lys-15 and Lys-24. N6-methylated lysine occurs at positions 28, 37, and 80.

This sequence belongs to the histone H3 family. The nucleosome is a histone octamer containing two molecules each of H2A, H2B, H3 and H4 assembled in one H3-H4 heterotetramer and two H2A-H2B heterodimers. The octamer wraps approximately 147 bp of DNA. Acetylation is generally linked to gene activation. Post-translationally, methylation at Lys-5 is linked to gene activation. Methylation at Lys-10 is linked to gene repression.

Its subcellular location is the nucleus. The protein localises to the chromosome. Core component of nucleosome. Nucleosomes wrap and compact DNA into chromatin, limiting DNA accessibility to the cellular machineries which require DNA as a template. Histones thereby play a central role in transcription regulation, DNA repair, DNA replication and chromosomal stability. DNA accessibility is regulated via a complex set of post-translational modifications of histones, also called histone code, and nucleosome remodeling. This is Histone H3, embryonic from Strongylocentrotus purpuratus (Purple sea urchin).